Here is a 474-residue protein sequence, read N- to C-terminus: MDTAVVWFRDDLRVTDNPTLADAVAAAETVIPVYTFDPDRYTESEYGPPKTGGHRAVFRRQAVADLRASLRDRGGDLLVRSGRPATVVPELAQRAGADAVYAQTKPATEERRRAADVASALDDAGIALRQRWTHTLYHPDDLPTPPTDIDDTFTPWRKETEAAATVRDPRSAPETVPTPDGLTPGPVPTVESLGVSEPPTDDRAVLEFEGGESAGKRRVESYIWEGDHLREYKTTRNGLLGADYSSKFSPWLAAGCLSPRWLHREVERYEDERVANEDTYWLVFELAWRDFFQFQFEKYGATFFKPGGIRERNIDWDRDRALFERWADGETGVPFVDANMRELNRTGYMSNRGRQNVASFLAGVLGIDWRWGAAYFEARLIDYDVASNWGNWAYQAGVGNDSRDRYFDVRSQAERYDSDAEYITTWLPELAALPATIAHQPWQLSEAEQREYGVELGVDYPEPVVDIDARYQSL.

The Photolyase/cryptochrome alpha/beta domain maps to 2-136 (DTAVVWFRDD…ALRQRWTHTL (135 aa)). Basic and acidic residues predominate over residues 161 to 171 (EAAATVRDPRS). Residues 161-202 (EAAATVRDPRSAPETVPTPDGLTPGPVPTVESLGVSEPPTDD) form a disordered region.

Belongs to the DNA photolyase class-1 family. FAD serves as cofactor. It depends on (6R)-5,10-methylene-5,6,7,8-tetrahydrofolate as a cofactor.

Functionally, may have a photoreceptor function. Binds DNA; probably functions as a transcriptional repressor. In Natronomonas pharaonis (strain ATCC 35678 / DSM 2160 / CIP 103997 / JCM 8858 / NBRC 14720 / NCIMB 2260 / Gabara) (Halobacterium pharaonis), this protein is Cryptochrome DASH (cry).